The primary structure comprises 310 residues: Olfactory receptor 5T7 (310 aa).

The Extracellular portion of the chain corresponds to 1–23 (MENITEVTEFILMGFTDNADLEI). Asparagine 3 carries an N-linked (GlcNAc...) asparagine glycan. A helical transmembrane segment spans residues 24–44 (LSFFLFLAIYLFTLMGNLGLI). At 45–52 (TLVIGDSR) the chain is on the cytoplasmic side. Residues 53–73 (LHNPMYYFLSVLSSVDACYST) form a helical membrane-spanning segment. Residues 74-97 (VITPQMVVDFVSEKKVISFIGCAT) lie on the Extracellular side of the membrane. A disulfide bridge connects residues cysteine 95 and cysteine 187. Residues 98-118 (QMFLAVTFGTTECFLLAAMAY) form a helical membrane-spanning segment. Topologically, residues 119 to 131 (DRYVAIHNPLMYV) are cytoplasmic. The helical transmembrane segment at 132–152 (VSMSPRVYVPLIIASYAGGIL) threads the bilayer. Topologically, residues 153 to 194 (HAVIHTVATFRLSFCGSNKISHIFCDIPPLLAISCSDTHFNQ) are extracellular. The helical transmembrane segment at 195–215 (LLLFYCAGFIEVVTILIVLLS) threads the bilayer. Residues 216-235 (YGFILSVILKTRSTEGKRKV) are Cytoplasmic-facing. Residues 236–256 (FSTCGSHLMAVSTFHGTVLFM) traverse the membrane as a helical segment. Topologically, residues 257 to 269 (YVRPSDSYALEHD) are extracellular. A helical membrane pass occupies residues 270 to 290 (MMVSIFYSIVIPMLNPLIYSL). Over 291 to 310 (RNKDVKEAIKKVFGKRILCG) the chain is Cytoplasmic.

The protein belongs to the G-protein coupled receptor 1 family.

It is found in the cell membrane. Its function is as follows. Potential odorant receptor. This Mus musculus (Mouse) protein is Olfactory receptor 5T7.